Reading from the N-terminus, the 516-residue chain is GPI mannosyltransferase 4 (516 aa).

The Lumenal segment spans residues 1–5 (MMRYQ). Residues 6-26 (WWLYLVYAIGLMLCLGPSYIH) traverse the membrane as a helical segment. The Cytoplasmic segment spans residues 27–60 (PDEHFQCIEILAMQFMKVKGTIPWEFKSKFAARS). Residues 61–81 (YGPLLLVYGPLFTILESFPEI) form a helical membrane-spanning segment. Residues 82–175 (QDNPALILYS…IQRSNFKNSV (94 aa)) are Lumenal-facing. Residues 176–196 (ILGLIFSFGVFNRVTFPAFIF) form a helical membrane-spanning segment. Topologically, residues 197 to 210 (LPCLILFWKFYRVH) are cytoplasmic. The chain crosses the membrane as a helical span at residues 211-231 (WKSFSLLLLSFSFSSCLFVLI). The Lumenal segment spans residues 232-270 (DTNIYNNGKGFVITPLNNLKYNLNVQNLQVHGLHPRYTH). A helical transmembrane segment spans residues 271 to 291 (LLVNLPQIVGPVLLLAIFSGY). The Cytoplasmic segment spans residues 292-295 (KLDK). A helical membrane pass occupies residues 296 to 316 (LSTYAIISGLLFLSFFQHQEL). R317 is a topological domain (lumenal). A helical membrane pass occupies residues 318 to 338 (FLVPLVPLLVTNLNWTPLSST). At 339–348 (LVNKKIFKGT) the chain is on the cytoplasmic side. The helical transmembrane segment at 349–369 (WLLFNIIMAFIMGISHQAGII) threads the bilayer. The Lumenal segment spans residues 370–516 (QFLGDYFHFR…GLTVYSIELL (147 aa)). N403 and N452 each carry an N-linked (GlcNAc...) asparagine glycan.

It belongs to the glycosyltransferase 22 family. PIGZ subfamily.

Its subcellular location is the endoplasmic reticulum membrane. The protein operates within glycolipid biosynthesis; glycosylphosphatidylinositol-anchor biosynthesis. In terms of biological role, alpha-1,2-mannosyltransferase involved in glycosylphosphatidylinositol-anchor biosynthesis. Transfers a fourth mannose to trimannosyl-GPIs during GPI precursor assembly. The presence of a fourth mannose in GPI is essential in fungi. Involved in plasmid maintenance with SMP2. This is GPI mannosyltransferase 4 (SMP3) from Saccharomyces cerevisiae (strain ATCC 204508 / S288c) (Baker's yeast).